Consider the following 91-residue polypeptide: Alpha-defensin-related sequence 2 (91 aa).

The signal sequence occupies residues Met-1–Ala-19. Residues Asp-20–Ala-58 constitute a propeptide that is removed on maturation. Residues Ile-22–Asp-48 are disordered. Basic and acidic residues predominate over residues Glu-27–Gln-40. Tandem repeats lie at residues Cys-65–Gln-67, Cys-68–Arg-70, Cys-71–Ser-73, Cys-74–Ser-76, Cys-77–Arg-79, Cys-80–Arg-82, and Cys-83–Arg-85. The segment at Cys-65–Arg-85 is 7 X 3 AA tandem repeats of C-P-X.

It belongs to the alpha-defensin family. As to expression, small bowel, spleen, colon, kidney, liver, stomach and femur marrow.

Its subcellular location is the secreted. In terms of biological role, apparent precursor of a secreted, cationic, proline- and cysteine-rich peptide that contains Cys-Pro-Xaa repeats. Unlike cryptdin, the proposed mature peptide region lacks the structural motif characteristic of defensins. It may have microbicidal activities. The polypeptide is Alpha-defensin-related sequence 2 (Defa-rs2) (Mus musculus (Mouse)).